The sequence spans 150 residues: UPF0178 protein Maqu_2186 (150 aa).

The protein belongs to the UPF0178 family.

This chain is UPF0178 protein Maqu_2186, found in Marinobacter nauticus (strain ATCC 700491 / DSM 11845 / VT8) (Marinobacter aquaeolei).